Reading from the N-terminus, the 143-residue chain is Ribonuclease H (143 aa).

The region spanning 1–140 is the RNase H type-1 domain; it reads MKVEIYTDGA…VDALANLGIE (140 aa). 4 residues coordinate Mg(2+): Asp-8, Glu-46, Asp-68, and Asp-132.

It belongs to the RNase H family. As to quaternary structure, monomer. Mg(2+) is required as a cofactor.

It localises to the cytoplasm. The catalysed reaction is Endonucleolytic cleavage to 5'-phosphomonoester.. Functionally, endonuclease that specifically degrades the RNA of RNA-DNA hybrids. This is Ribonuclease H from Legionella pneumophila (strain Paris).